The following is a 372-amino-acid chain: Cyclin-dependent kinase 9 (372 aa).

The Protein kinase domain maps to 19-315 (YEKLAKIGQG…SDDALNHDFF (297 aa)). 25–33 (IGQGTFGEV) lines the ATP pocket. K44 carries the N6-acetyllysine; by EP300/CBP, PCAF/KAT2B and GCN5/KAT2A modification. ATP contacts are provided by residues K48 and 104–106 (DFC). K48 carries the post-translational modification N6-acetyllysine; by PCAF/KAT2B and GCN5/KAT2A. D149 acts as the Proton acceptor in catalysis. Residues 166–191 (ADFGLARAFSLAKNSQPNRYTNRVVT) form a T-loop region. Residue D167 participates in ATP binding. Residue S175 is modified to Phosphoserine. At T186 the chain carries Phosphothreonine; by CaMK1D. The tract at residues 343 to 372 (RRKGSQITQQSTNQSRNPATTNQTEFERVF) is disordered. S347 carries the post-translational modification Phosphoserine; by CDK9 and PKA. Positions 347 to 366 (SQITQQSTNQSRNPATTNQT) are enriched in polar residues. A Phosphothreonine; by CDK9 modification is found at T350. At S353 the chain carries Phosphoserine; by CDK9. Phosphothreonine; by CDK9 is present on T354. A Phosphoserine; by CDK9 modification is found at S357. 2 positions are modified to phosphothreonine; by CDK9: T362 and T363.

This sequence belongs to the protein kinase superfamily. CMGC Ser/Thr protein kinase family. CDC2/CDKX subfamily. Component of the super elongation complex (SEC), at least composed of EAF1, EAF2, CDK9, MLLT3/AF9, AFF (AFF1 or AFF4), the P-TEFb complex and ELL (ELL, ELL2 or ELL3). Associates with CCNT1/cyclin-T1, CCNT2/cyclin-T2 (isoform A and isoform B) or CCNK/cyclin-K to form active P-TEFb. P-TEFb forms a complex with AFF4/AF5Q31 and is part of the super elongation complex (SEC). Component of a complex which is composed of at least 5 members: HTATSF1/Tat-SF1, P-TEFb complex, RNA pol II, SUPT5H, and NCL/nucleolin. Associates with UBR5 and forms a transcription regulatory complex composed of CDK9, RNAP II, UBR5 and TFIIS/TCEA1 that can stimulate target gene transcription (e.g. gamma fibrinogen/FGG) by recruiting their promoters. Component of the 7SK snRNP inactive complex which is composed of at least 8 members: P-TEFb (composed of CDK9 and CCNT1/cyclin-T1), HEXIM1, HEXIM2, LARP7, BCDIN3, SART3 proteins and 7SK and U6 snRNAs. This inactive 7SK snRNP complex can also interact with NCOR1 and HDAC3, probably to regulate CDK9 acetylation. Release of P-TEFb from P-TEFb/7SK snRNP complex requires both PP2B to transduce calcium Ca(2+) signaling in response to stimuli (e.g. UV or hexamethylene bisacetamide (HMBA)), and PPP1CA to dephosphorylate Thr-186. This released P-TEFb remains inactive in the pre-initiation complex with BRD4 until new Thr-186 phosphorylation occurs after the synthesis of a short RNA. Interacts with BRD4; to target chromatin binding. Interacts with JMJD6. Interacts with activated nuclear STAT3 and RELA/p65. Binds to AR and MYOD1. Forms a complex composed of CDK9, CCNT1/cyclin-T1, EP300 and GATA4 that stimulates hypertrophy in cardiomyocytes. The large PER complex involved in the repression of transcriptional termination is composed of at least PER2, CDK9, DDX5, DHX9, NCBP1 and POLR2A. Interacts with HSF1. Interacts with TBX21. Interacts with WDR43. Interacts with ZMYND8; the association appears to occur between homodimeric ZMYND8 and the activated form of the P-TEFb complex. In terms of processing, autophosphorylation at Thr-186, Ser-347, Thr-350, Ser-353, Thr-354 and Ser-357 triggers kinase activity by promoting cyclin and substrate binding upon conformational changes. Thr-186 phosphorylation requires the calcium Ca(2+) signaling pathway, including CaMK1D and calmodulin. This inhibition is relieved by Thr-29 dephosphorylation. Phosphorylation at Ser-175 inhibits kinase activity. Can be phosphorylated on either Thr-362 or Thr-363 but not on both simultaneously. Dephosphorylation of Thr-186 by PPM1A and PPM1B blocks CDK9 activity and may lead to CDK9 proteasomal degradation. However, PPP1CA-mediated Thr-186 dephosphorylation is required to release P-TEFb from its inactive P-TEFb/7SK snRNP complex. Dephosphorylated at Ser-347 by the PNUTS-PP1 complex during RNA polymerase II transcription pause-release. Dephosphorylation of C-terminus Thr and Ser residues by protein phosphatase-1 (PP1) triggers CDK9 activity. Post-translationally, N6-acetylation of Lys-44 promotes kinase activity, whereas acetylation of both Lys-44 and Lys-48 mediated by PCAF/KAT2B and GCN5/KAT2A reduces kinase activity. The acetylated form associates with PML bodies in the nuclear matrix and with the transcriptionally silent HIV-1 genome; deacetylated upon transcription stimulation. Deacetylated by SIRT7, promoting the kinase activity and subsequent 'Ser-2' phosphorylation of the C-terminal domain (CTD) of RNA polymerase II. In terms of processing, polyubiquitinated and thus activated by UBR5. This ubiquitination is promoted by TFIIS/TCEA1 and favors 'Ser-2' phosphorylation of RPB1/POLR2A CTD.

It is found in the nucleus. Its subcellular location is the cytoplasm. The protein resides in the PML body. It catalyses the reaction L-seryl-[protein] + ATP = O-phospho-L-seryl-[protein] + ADP + H(+). The catalysed reaction is L-threonyl-[protein] + ATP = O-phospho-L-threonyl-[protein] + ADP + H(+). It carries out the reaction [DNA-directed RNA polymerase] + ATP = phospho-[DNA-directed RNA polymerase] + ADP + H(+). Activation by Thr-186 phosphorylation is calcium Ca(2+) signaling pathway-dependent; actively inactivated by dephosphorylation mediated by PPP1CA, PPM1A and PPM1B. Reversibly repressed by acetylation at Lys-44 and Lys-48. Functionally, protein kinase involved in the regulation of transcription. Member of the cyclin-dependent kinase pair (CDK9/cyclin-T) complex, also called positive transcription elongation factor b (P-TEFb), which facilitates the transition from abortive to productive elongation by phosphorylating the CTD (C-terminal domain) of the large subunit of RNA polymerase II (RNAP II) POLR2A, SUPT5H and RDBP. This complex is inactive when in the 7SK snRNP complex form. Phosphorylates EP300, MYOD1, RPB1/POLR2A and AR and the negative elongation factors DSIF and NELFE. Regulates cytokine inducible transcription networks by facilitating promoter recognition of target transcription factors (e.g. TNF-inducible RELA/p65 activation and IL-6-inducible STAT3 signaling). Promotes RNA synthesis in genetic programs for cell growth, differentiation and viral pathogenesis. P-TEFb is also involved in cotranscriptional histone modification, mRNA processing and mRNA export. Modulates a complex network of chromatin modifications including histone H2B monoubiquitination (H2Bub1), H3 lysine 4 trimethylation (H3K4me3) and H3K36me3; integrates phosphorylation during transcription with chromatin modifications to control co-transcriptional histone mRNA processing. The CDK9/cyclin-K complex has also a kinase activity towards CTD of RNAP II and can substitute for CDK9/cyclin-T P-TEFb in vitro. Replication stress response protein; the CDK9/cyclin-K complex is required for genome integrity maintenance, by promoting cell cycle recovery from replication arrest and limiting single-stranded DNA amount in response to replication stress, thus reducing the breakdown of stalled replication forks and avoiding DNA damage. In addition, probable function in DNA repair of isoform 2 via interaction with KU70/XRCC6. Promotes cardiac myocyte enlargement. RPB1/POLR2A phosphorylation on 'Ser-2' in CTD activates transcription. AR phosphorylation modulates AR transcription factor promoter selectivity and cell growth. DSIF and NELF phosphorylation promotes transcription by inhibiting their negative effect. The phosphorylation of MYOD1 enhances its transcriptional activity and thus promotes muscle differentiation. Catalyzes phosphorylation of KAT5, promoting KAT5 recruitment to chromatin and histone acetyltransferase activity. This chain is Cyclin-dependent kinase 9 (CDK9), found in Bos taurus (Bovine).